A 155-amino-acid chain; its full sequence is 3-hydroxyacyl-[acyl-carrier-protein] dehydratase FabZ (155 aa).

The active site involves His-58.

Belongs to the thioester dehydratase family. FabZ subfamily.

The protein localises to the cytoplasm. The catalysed reaction is a (3R)-hydroxyacyl-[ACP] = a (2E)-enoyl-[ACP] + H2O. Its function is as follows. Involved in unsaturated fatty acids biosynthesis. Catalyzes the dehydration of short chain beta-hydroxyacyl-ACPs and long chain saturated and unsaturated beta-hydroxyacyl-ACPs. In Rhizobium etli (strain CIAT 652), this protein is 3-hydroxyacyl-[acyl-carrier-protein] dehydratase FabZ.